Reading from the N-terminus, the 252-residue chain is 2-succinyl-6-hydroxy-2,4-cyclohexadiene-1-carboxylate synthase (252 aa).

Belongs to the AB hydrolase superfamily. MenH family. As to quaternary structure, monomer.

It catalyses the reaction 5-enolpyruvoyl-6-hydroxy-2-succinyl-cyclohex-3-ene-1-carboxylate = (1R,6R)-6-hydroxy-2-succinyl-cyclohexa-2,4-diene-1-carboxylate + pyruvate. It participates in quinol/quinone metabolism; 1,4-dihydroxy-2-naphthoate biosynthesis; 1,4-dihydroxy-2-naphthoate from chorismate: step 3/7. The protein operates within quinol/quinone metabolism; menaquinone biosynthesis. In terms of biological role, catalyzes a proton abstraction reaction that results in 2,5-elimination of pyruvate from 2-succinyl-5-enolpyruvyl-6-hydroxy-3-cyclohexene-1-carboxylate (SEPHCHC) and the formation of 2-succinyl-6-hydroxy-2,4-cyclohexadiene-1-carboxylate (SHCHC). The protein is 2-succinyl-6-hydroxy-2,4-cyclohexadiene-1-carboxylate synthase of Shigella boydii serotype 4 (strain Sb227).